The sequence spans 283 residues: Tryptophan 2,3-dioxygenase (283 aa).

Substrate contacts are provided by residues 52 to 56 (FIIQH), Y114, and R118. Heme is bound at residue H241. Position 255 (T255) interacts with substrate.

This sequence belongs to the tryptophan 2,3-dioxygenase family. In terms of assembly, homotetramer. Requires heme as cofactor.

The catalysed reaction is L-tryptophan + O2 = N-formyl-L-kynurenine. Its pathway is amino-acid degradation; L-tryptophan degradation via kynurenine pathway; L-kynurenine from L-tryptophan: step 1/2. Functionally, heme-dependent dioxygenase that catalyzes the oxidative cleavage of the L-tryptophan (L-Trp) pyrrole ring and converts L-tryptophan to N-formyl-L-kynurenine. Catalyzes the oxidative cleavage of the indole moiety. This chain is Tryptophan 2,3-dioxygenase, found in Pseudomonas fluorescens (strain ATCC BAA-477 / NRRL B-23932 / Pf-5).